The sequence spans 1147 residues: SR-related and CTD-associated factor 4 (1147 aa).

A CID domain is found at 1-139 (MDAVNAFNQE…PLLDMAAGTS (139 aa)). Lys-49 carries the N6-acetyllysine modification. 4 disordered regions span residues 145-179 (AENVTNNEGSPPPPVKVSSEPPTQATPNSVPAVPQ), 235-254 (KTTPTQPSEQKAAFPPPEQK), 269-331 (DEPE…QQPA), and 424-502 (VKRH…KPET). The residue at position 154 (Ser-154) is a Phosphoserine. 2 stretches are compositionally biased toward low complexity: residues 283–292 (TAVTTTAPAA) and 299–310 (TATVPAAAAPAA). The segment covering 424-433 (VKRHMSDNRK) has biased composition (basic and acidic residues). Residues 434–475 (SRSRSASRSPKRRRSRSGSRSRRSRHRRSRSRSRDRRRHSPR) show a composition bias toward basic residues. Residues 477-492 (RSQERRDREKERERRQ) show a composition bias toward basic and acidic residues. One can recognise an RRM domain in the interval 508–582 (TTLWVGQLDK…KSIKIAWALN (75 aa)). 2 disordered regions span residues 629–661 (DWKGIPKKPENEVAQNGGAETSHTEPVSPIPKP) and 879–1147 (RPMP…EAPR). Position 656 is a phosphoserine (Ser-656). Residues 879-913 (RPMPPHMMHRGPPPGPGGFAMPPPHGMKGPFPPHG) show a composition bias toward pro residues. The span at 941 to 965 (QQPPQQPQQQPQPQAPQQPQQQQQQ) shows a compositional bias: low complexity. Positions 966-977 (QPPPSQQPPPTQ) are enriched in pro residues. Ser-1004 carries the post-translational modification Phosphoserine. Residues 1009 to 1085 (VENDRERYGN…RGKEKPEVTD (77 aa)) show a composition bias toward basic and acidic residues.

As to quaternary structure, interacts with POLR2A; via C-terminal heptapeptide repeat domain (CTD) phosphorylated at 'Ser-2' and 'Ser-5'.

It localises to the nucleus. In terms of biological role, anti-terminator protein required to prevent early mRNA termination during transcription. Together with SCAF8, acts by suppressing the use of early, alternative poly(A) sites, thereby preventing the accumulation of non-functional truncated proteins. Mechanistically, associates with the phosphorylated C-terminal heptapeptide repeat domain (CTD) of the largest RNA polymerase II subunit (POLR2A), and subsequently binds nascent RNA upstream of early polyadenylation sites to prevent premature mRNA transcript cleavage and polyadenylation. Independently of SCAF8, also acts as a suppressor of transcriptional readthrough. In Homo sapiens (Human), this protein is SR-related and CTD-associated factor 4.